The primary structure comprises 361 residues: Very-long-chain 3-oxoacyl-CoA reductase (361 aa).

Residues 32–52 traverse the membrane as a helical segment; the sequence is PALILSTVGAAFLLRYTLSIF. Valine 79, aspartate 133, asparagine 163, arginine 198, tyrosine 236, lysine 240, valine 269, and serine 271 together coordinate NADP(+). Tyrosine 236 serves as the catalytic Proton donor. Catalysis depends on lysine 240, which acts as the Lowers pKa of active site Tyr.

The protein belongs to the short-chain dehydrogenases/reductases (SDR) family.

It is found in the endoplasmic reticulum membrane. It carries out the reaction a very-long-chain (3R)-3-hydroxyacyl-CoA + NADP(+) = a very-long-chain 3-oxoacyl-CoA + NADPH + H(+). It participates in lipid metabolism; fatty acid biosynthesis. In terms of biological role, component of the microsomal membrane bound fatty acid elongation system, which produces the 26-carbon very long-chain fatty acids (VLCFA) from palmitate. Catalyzes the reduction of the 3-ketoacyl-CoA intermediate that is formed in each cycle of fatty acid elongation. VLCFAs serve as precursors for ceramide and sphingolipids. This chain is Very-long-chain 3-oxoacyl-CoA reductase, found in Cryptococcus neoformans var. neoformans serotype D (strain B-3501A) (Filobasidiella neoformans).